Here is a 254-residue protein sequence, read N- to C-terminus: Ankyrin repeat domain-containing protein 7 (254 aa).

ANK repeat units lie at residues 58 to 87, 91 to 120, 124 to 153, 157 to 186, and 190 to 219; these read KYRT…KINV, ENKS…DPDL, RYNT…DLEA, DGYT…DVNA, and YQRT…ELCY.

As to expression, testis specific.

The protein is Ankyrin repeat domain-containing protein 7 (ANKRD7) of Homo sapiens (Human).